A 179-amino-acid chain; its full sequence is Nucleoside-triphosphatase THEP1 (179 aa).

ATP-binding positions include 7 to 14 and 94 to 101; these read GRPGVGKT and LIIVDEIG.

The protein belongs to the THEP1 NTPase family.

The catalysed reaction is a ribonucleoside 5'-triphosphate + H2O = a ribonucleoside 5'-diphosphate + phosphate + H(+). Functionally, has nucleotide phosphatase activity towards ATP, GTP, CTP, TTP and UTP. May hydrolyze nucleoside diphosphates with lower efficiency. The polypeptide is Nucleoside-triphosphatase THEP1 (Thermotoga petrophila (strain ATCC BAA-488 / DSM 13995 / JCM 10881 / RKU-1)).